The primary structure comprises 130 residues: Phosphoribosyl-AMP cyclohydrolase (130 aa).

Aspartate 78 is a Mg(2+) binding site. Cysteine 79 serves as a coordination point for Zn(2+). Aspartate 80 and aspartate 82 together coordinate Mg(2+). Zn(2+)-binding residues include cysteine 96 and cysteine 103.

This sequence belongs to the PRA-CH family. In terms of assembly, homodimer. Mg(2+) is required as a cofactor. Requires Zn(2+) as cofactor.

It localises to the cytoplasm. The enzyme catalyses 1-(5-phospho-beta-D-ribosyl)-5'-AMP + H2O = 1-(5-phospho-beta-D-ribosyl)-5-[(5-phospho-beta-D-ribosylamino)methylideneamino]imidazole-4-carboxamide. It participates in amino-acid biosynthesis; L-histidine biosynthesis; L-histidine from 5-phospho-alpha-D-ribose 1-diphosphate: step 3/9. In terms of biological role, catalyzes the hydrolysis of the adenine ring of phosphoribosyl-AMP. The chain is Phosphoribosyl-AMP cyclohydrolase from Nitrosospira multiformis (strain ATCC 25196 / NCIMB 11849 / C 71).